Here is a 117-residue protein sequence, read N- to C-terminus: Large ribosomal subunit protein bL20 (117 aa).

This sequence belongs to the bacterial ribosomal protein bL20 family.

Binds directly to 23S ribosomal RNA and is necessary for the in vitro assembly process of the 50S ribosomal subunit. It is not involved in the protein synthesizing functions of that subunit. This chain is Large ribosomal subunit protein bL20, found in Idiomarina loihiensis (strain ATCC BAA-735 / DSM 15497 / L2-TR).